Reading from the N-terminus, the 292-residue chain is 4-hydroxy-tetrahydrodipicolinate synthase (292 aa).

Thr44 is a binding site for pyruvate. Tyr132 functions as the Proton donor/acceptor in the catalytic mechanism. Catalysis depends on Lys161, which acts as the Schiff-base intermediate with substrate. Ile203 lines the pyruvate pocket.

This sequence belongs to the DapA family. Homotetramer.

The protein resides in the cytoplasm. The catalysed reaction is L-aspartate 4-semialdehyde + pyruvate = (2S,4S)-4-hydroxy-2,3,4,5-tetrahydrodipicolinate + H2O + H(+). It functions in the pathway amino-acid biosynthesis; L-lysine biosynthesis via DAP pathway; (S)-tetrahydrodipicolinate from L-aspartate: step 3/4. Is feedback inhibited by lysine. Is competitively inhibited by 2-oxobutyrate with respect to pyruvate. Its function is as follows. Catalyzes the condensation of (S)-aspartate-beta-semialdehyde [(S)-ASA] and pyruvate to 4-hydroxy-tetrahydrodipicolinate (HTPA). The polypeptide is 4-hydroxy-tetrahydrodipicolinate synthase (Rhizobium meliloti (Ensifer meliloti)).